Reading from the N-terminus, the 349-residue chain is MDLFDKLKELHEQGLAEIKKATDEQTLNKIRVELVGRKGELTKILHSMRDVAPENRREVGQKVNELRDLFNKQLDTTKAKIVKAVLAKKLEDEKIDVTLPGREGHLGSKHPINIILDDLESYFIGMGYKVVQGPEIETDHYCFEMMNLPKDHPARDMQATFYIDGEDLLRTQTSGDQARVLEKHDFSKSPLKMVGPGKVYRRDDDDATHSHQFMQMEGLVVDKNVTMSDLKGTLEMIAKHVFGQDRATRLRPSYFPFTEPSVEMDVSCFNCDGKGCPICKYTGWIEVLGAGMVHPNVLENAGVDSTVYGGFAFGLGLDRFAILKYGIDDIRDFYTNDVRFLKQFRKEEN.

Residue Glu-259 participates in Mg(2+) binding.

The protein belongs to the class-II aminoacyl-tRNA synthetase family. Phe-tRNA synthetase alpha subunit type 1 subfamily. Tetramer of two alpha and two beta subunits. The cofactor is Mg(2+).

It localises to the cytoplasm. The enzyme catalyses tRNA(Phe) + L-phenylalanine + ATP = L-phenylalanyl-tRNA(Phe) + AMP + diphosphate + H(+). The chain is Phenylalanine--tRNA ligase alpha subunit from Lactobacillus helveticus (strain DPC 4571).